Consider the following 440-residue polypeptide: tRNA(Ile)-lysidine synthase (440 aa).

Ser31 to Ser36 lines the ATP pocket.

This sequence belongs to the tRNA(Ile)-lysidine synthase family.

It localises to the cytoplasm. The catalysed reaction is cytidine(34) in tRNA(Ile2) + L-lysine + ATP = lysidine(34) in tRNA(Ile2) + AMP + diphosphate + H(+). Ligates lysine onto the cytidine present at position 34 of the AUA codon-specific tRNA(Ile) that contains the anticodon CAU, in an ATP-dependent manner. Cytidine is converted to lysidine, thus changing the amino acid specificity of the tRNA from methionine to isoleucine. This chain is tRNA(Ile)-lysidine synthase, found in Borreliella burgdorferi (strain ATCC 35210 / DSM 4680 / CIP 102532 / B31) (Borrelia burgdorferi).